A 515-amino-acid polypeptide reads, in one-letter code: Synaptic vesicular amine transporter (515 aa).

At 1–20 (MALSDLVLLRWLRDSRHSRK) the chain is on the cytoplasmic side. A helical membrane pass occupies residues 21 to 41 (LILFIVFLALLLDNMLLTVVV). The Lumenal, vesicle portion of the chain corresponds to 42 to 130 (PIIPSYLYSI…EDRDLLNENV (89 aa)). N-linked (GlcNAc...) asparagine glycans are attached at residues asparagine 56, asparagine 80, asparagine 81, asparagine 89, and asparagine 111. A disulfide bridge links cysteine 118 with cysteine 325. The helical transmembrane segment at 131 to 151 (QVGLLFASKATVQLLTNPFIG) threads the bilayer. At 152-160 (LLTNRIGYP) the chain is on the cytoplasmic side. A helical transmembrane segment spans residues 161-181 (IPMFAGFCIMFISTVMFAFSS). Residues 182–190 (SYAFLLIAR) are Lumenal, vesicle-facing. The helical transmembrane segment at 191-211 (SLQGIGSSCSSVAGMGMLASV) threads the bilayer. The Cytoplasmic portion of the chain corresponds to 212-220 (YTDDEERGK). The helical transmembrane segment at 221–243 (PMGIALGGLAMGVLVGPPFGSVL) threads the bilayer. Leucine 229 and valine 233 together coordinate serotonin. Residues 244-249 (YEFVGK) are Lumenal, vesicle-facing. The chain crosses the membrane as a helical span at residues 250–272 (TAPFLVLAALVLLDGAIQLFVLQ). Residues 273–292 (PSRVQPESQKGTPLTTLLKD) are Cytoplasmic-facing. The chain crosses the membrane as a helical span at residues 293 to 312 (PYILIAAGSICFANMGIAML). Residues asparagine 306, isoleucine 309, glutamate 313, phenylalanine 335, and tyrosine 342 each coordinate serotonin. Residues 313–329 (EPALPIWMMETMCSRKW) are Lumenal, vesicle-facing. Residues 330-353 (QLGVAFLPASISYLIGTNIFGILA) traverse the membrane as a helical segment. The Cytoplasmic segment spans residues 354-358 (HKMGR). A helical membrane pass occupies residues 359 to 379 (WLCALLGMVIVGISILCIPFA). Topologically, residues 380-390 (KNIYGLIAPNF) are lumenal, vesicle. The helical transmembrane segment at 391–411 (GVGFAIGMVDSSMMPIMGYLV) threads the bilayer. Aspartate 400 contacts serotonin. Residues 412–415 (DLRH) lie on the Cytoplasmic side of the membrane. A helical membrane pass occupies residues 416–436 (VSVYGSVYAIADVAFCMGYAI). Position 434 (tyrosine 434) interacts with serotonin. Residues 437 to 441 (GPSAG) lie on the Lumenal, vesicle side of the membrane. A helical membrane pass occupies residues 442–463 (GAIAKAIGFPWLMTIIGIIDIA). Residues 464 to 515 (FAPLCFFLRSPPAKEEKMAILMDHNCPIKRKMYTQNNVQSYPIGDDEESESD) lie on the Cytoplasmic side of the membrane. Serine 512 and serine 514 each carry phosphoserine; by CK2.

This sequence belongs to the major facilitator superfamily. Vesicular transporter family. In terms of assembly, interacts with SLC6A3. Expressed in the substantia nigra and the tuberomammillary nucleus of the posterior hypothalamus. Expressed in stomach, in particular in varicose nerve fibers and enterochromaffin-like cells in the corpus region (at protein level).

Its subcellular location is the cytoplasmic vesicle. The protein localises to the secretory vesicle. It is found in the synaptic vesicle membrane. The protein resides in the secretory vesicle membrane. It localises to the cell projection. Its subcellular location is the axon. The protein localises to the dendrite. It carries out the reaction serotonin(in) + 2 H(+)(out) = serotonin(out) + 2 H(+)(in). The enzyme catalyses dopamine(in) + 2 H(+)(out) = dopamine(out) + 2 H(+)(in). It catalyses the reaction histamine(in) + 2 H(+)(out) = histamine(out) + 2 H(+)(in). Strongly inhibited by reserpine and tetrabenazine. Also inhibited to a lesser extent by ketanserin and fenfluramine. Reserpine and ketanserin inhibit by blocking the substrate-binding pocket. Tetrabenazine traps SLC18A2/VMAT2 in an occluded conformation and its inhibition is specific to SLC18A2/VMAT2 but not SLC18A1/VMAT1. Its function is as follows. Electrogenic antiporter that exchanges one cationic monoamine with two intravesicular protons across the membrane of secretory and synaptic vesicles. Uses the electrochemical proton gradient established by the V-type proton-pump ATPase to accumulate high concentrations of monoamines inside the vesicles prior to their release via exocytosis. Transports a variety of catecholamines such as dopamine, adrenaline and noradrenaline, histamine, and indolamines such as serotonin. Regulates the transvesicular monoaminergic gradient that determines the quantal size. Mediates somatodendritic dopamine release in hippocampal neurons, likely as part of a regulated secretory pathway that integrates retrograde synaptic signals. Acts as a primary transporter for striatal dopamine loading ensuring impulse-dependent release of dopamine at the synaptic cleft. Responsible for histamine and serotonin storage and subsequent corelease from mast cell granules. The protein is Synaptic vesicular amine transporter (Slc18a2) of Rattus norvegicus (Rat).